A 182-amino-acid chain; its full sequence is Adenine phosphoribosyltransferase (182 aa).

This sequence belongs to the purine/pyrimidine phosphoribosyltransferase family. As to quaternary structure, homodimer.

Its subcellular location is the cytoplasm. The enzyme catalyses AMP + diphosphate = 5-phospho-alpha-D-ribose 1-diphosphate + adenine. The protein operates within purine metabolism; AMP biosynthesis via salvage pathway; AMP from adenine: step 1/1. Functionally, catalyzes a salvage reaction resulting in the formation of AMP, that is energically less costly than de novo synthesis. The polypeptide is Adenine phosphoribosyltransferase (Campylobacter hominis (strain ATCC BAA-381 / DSM 21671 / CCUG 45161 / LMG 19568 / NCTC 13146 / CH001A)).